A 220-amino-acid chain; its full sequence is Probable nicotinate-nucleotide adenylyltransferase (220 aa).

The protein belongs to the NadD family.

The catalysed reaction is nicotinate beta-D-ribonucleotide + ATP + H(+) = deamido-NAD(+) + diphosphate. It participates in cofactor biosynthesis; NAD(+) biosynthesis; deamido-NAD(+) from nicotinate D-ribonucleotide: step 1/1. In terms of biological role, catalyzes the reversible adenylation of nicotinate mononucleotide (NaMN) to nicotinic acid adenine dinucleotide (NaAD). This Serratia proteamaculans (strain 568) protein is Probable nicotinate-nucleotide adenylyltransferase.